The sequence spans 161 residues: uncharacterized protein (161 aa).

The segment at 126 to 161 (TPSNCGESSTSSGQSSGDESNCSLRTHGVYTRGEQH) is disordered. Residues 128-148 (SNCGESSTSSGQSSGDESNCS) are compositionally biased toward low complexity.

This sequence belongs to the herpesviridae US1 family.

This is an uncharacterized protein from Human cytomegalovirus (strain AD169) (HHV-5).